Reading from the N-terminus, the 265-residue chain is Tryptophan synthase alpha chain (265 aa).

Catalysis depends on proton acceptor residues glutamate 49 and aspartate 60.

It belongs to the TrpA family. As to quaternary structure, tetramer of two alpha and two beta chains.

It carries out the reaction (1S,2R)-1-C-(indol-3-yl)glycerol 3-phosphate + L-serine = D-glyceraldehyde 3-phosphate + L-tryptophan + H2O. Its pathway is amino-acid biosynthesis; L-tryptophan biosynthesis; L-tryptophan from chorismate: step 5/5. The alpha subunit is responsible for the aldol cleavage of indoleglycerol phosphate to indole and glyceraldehyde 3-phosphate. This chain is Tryptophan synthase alpha chain, found in Polynucleobacter asymbioticus (strain DSM 18221 / CIP 109841 / QLW-P1DMWA-1) (Polynucleobacter necessarius subsp. asymbioticus).